Consider the following 359-residue polypeptide: Mitochondrial glutathione transporter SLC25A39 (359 aa).

Over 1 to 18 the chain is Mitochondrial intermembrane; that stretch reads MGDRPAVRISAAITPVQQ. 3 Solcar repeats span residues 13-149, 157-241, and 251-346; these read ITPV…LRDF, HGDH…VKAQ, and ASFT…GKTF. The chain crosses the membrane as a helical span at residues 19–39; sequence MLASGTGAVLTSLFVTPLDVV. Residues 40 to 119 are Mitochondrial matrix-facing; sequence KIRLQAQQTP…VKITHNEGLR (80 aa). 4 residues coordinate [2Fe-2S] cluster: C72, C76, C86, and C92. The chain crosses the membrane as a helical span at residues 120–140; the sequence is SLWSGLPPTLVMAVPATVIYF. Residues 141–162 lie on the Mitochondrial intermembrane side of the membrane; the sequence is TCYDQLRDFLCYSMGYHGDHIP. A helical membrane pass occupies residues 163-183; it reads LIAGGLARLGAVSVISPLELV. Over 184 to 212 the chain is Mitochondrial matrix; the sequence is RTKMQSRRLQYSELMVCIRSSVAQDGWLS. The helical transmembrane segment at 213 to 233 threads the bilayer; it reads LWRGWGPTVLRDVPFSALYWF. At 234–253 the chain is on the mitochondrial intermembrane side; it reads NYELVKAQLCEHYRTPQASF. A helical transmembrane segment spans residues 254–274; sequence TISFTAGAVSGAIAAVLTLPF. Residues 275 to 316 lie on the Mitochondrial matrix side of the membrane; the sequence is DVVKTRRQIQLGEMEALGAVSMKKPSSTWNMMRNIWIDMGYK. A helical membrane pass occupies residues 317 to 337; the sequence is GLFAGFLPRVIKVAPACAVMI. The Mitochondrial intermembrane segment spans residues 338–359; that stretch reads STYEFGKTFFQERNLHQARCGL.

Belongs to the mitochondrial carrier (TC 2.A.29) family. Post-translationally, cleaved and degraded by AFG3L2; degradation by AFG3L2 is regulated by the ability of SLC25A39 to bind iron-sulfur. In absence of mitochondrial glutathione, SLC25A39 binds iron-sulfur, preventing cleavage and degradation by AFG3L2. The presence of mitochondrial glutathione prevents iron-sulfur-binding to SLC25A39, promoting cleavage and degradation by AFG3L2.

The protein resides in the mitochondrion inner membrane. The enzyme catalyses glutathione(in) = glutathione(out). The activity of SLC25A39 is regulated by levels of mitochondrial glutathione via its ability to bind [2Fe-2S] iron-sulfur cluster. Upon physiological levels of mitochondrial glutathione, glutathione prevents iron-sulfur-binding to SLC25A39 promoting cleavage and degradation by AFG3L2. Upon depletion of mitochondrial glutathione, SLC25A39 binds iron-sulfur, preventing cleavage and degradation by AFG3L2. Its function is as follows. Mitochondrial transporter required for glutathione import into mitochondria. Glutathione, which plays key roles in oxidative metabolism, is produced exclusively in the cytosol and is imported in many organelles. Mitochondrial glutathione is required for the activity and stability of proteins containing iron-sulfur clusters, as well as erythropoiesis. Involved in the early steps of heme biosynthesis. The protein is Mitochondrial glutathione transporter SLC25A39 (slc25a39) of Danio rerio (Zebrafish).